Consider the following 358-residue polypeptide: Alanine racemase (358 aa).

Lys-35 acts as the Proton acceptor; specific for D-alanine in catalysis. At Lys-35 the chain carries N6-(pyridoxal phosphate)lysine. A substrate-binding site is contributed by Arg-130. Tyr-255 functions as the Proton acceptor; specific for L-alanine in the catalytic mechanism. Met-303 provides a ligand contact to substrate.

It belongs to the alanine racemase family. Requires pyridoxal 5'-phosphate as cofactor.

It catalyses the reaction L-alanine = D-alanine. It functions in the pathway amino-acid biosynthesis; D-alanine biosynthesis; D-alanine from L-alanine: step 1/1. Catalyzes the interconversion of L-alanine and D-alanine. May also act on other amino acids. This Shewanella putrefaciens (strain CN-32 / ATCC BAA-453) protein is Alanine racemase (alr).